The sequence spans 104 residues: Large ribosomal subunit protein uL24 (104 aa).

The protein belongs to the universal ribosomal protein uL24 family. Part of the 50S ribosomal subunit.

Functionally, one of two assembly initiator proteins, it binds directly to the 5'-end of the 23S rRNA, where it nucleates assembly of the 50S subunit. One of the proteins that surrounds the polypeptide exit tunnel on the outside of the subunit. The polypeptide is Large ribosomal subunit protein uL24 (Bradyrhizobium sp. (strain ORS 278)).